A 118-amino-acid polypeptide reads, in one-letter code: Neutral phospholipase A2 homolog taipoxin beta chain 2 (118 aa).

Intrachain disulfides connect Cys11-Cys71, Cys27-Cys117, Cys29-Cys45, Cys44-Cys98, Cys51-Cys91, Cys60-Cys84, and Cys78-Cys89.

It belongs to the phospholipase A2 family. Group I subfamily. D49 sub-subfamily. As to quaternary structure, heterotrimer of alpha, beta, and gamma chains; non-covalently linked. In terms of tissue distribution, expressed by the venom gland.

Its subcellular location is the secreted. Heterotrimer: Snake venom phospholipase A2 (PLA2) heterotrimer that acts as a potent presynaptic neurotoxin by blocking synaptic transmission and synaptic vesicle recycling. May act by binding in a calcium-dependent fashion to neurotonal pentraxin-1 (NPTX1) and neurotonal pentraxin-2 (NPTX2), but not to neuronal pentraxin receptor (NPTXR). Also binds to taipoxin-associated calcium binding protein 49 (RCN2), a protein localized in the lumen of endoplasmic reticulum. Its function is as follows. Monomer (beta chain): Snake venom phospholipase A2 homolog that is neither toxic nor enzymatically active. Does not bind calcium. The polypeptide is Neutral phospholipase A2 homolog taipoxin beta chain 2 (Oxyuranus scutellatus scutellatus (Australian taipan)).